A 508-amino-acid chain; its full sequence is Glucose-1-phosphate adenylyltransferase small subunit 1, chloroplastic (508 aa).

The segment at 1–27 is disordered; the sequence is MSSIVTSGVINVPRSSSSSKNLSFSSS. The N-terminal 59 residues, 1-59, are a transit peptide targeting the chloroplast; that stretch reads MSSIVTSGVINVPRSSSSSKNLSFSSSSQLSGNKILTVSGNGAPRGRCTLKHVFLTPKA. Residues 15–27 are compositionally biased toward low complexity; the sequence is SSSSSKNLSFSSS.

The protein belongs to the bacterial/plant glucose-1-phosphate adenylyltransferase family. In terms of assembly, heterotetramer. In terms of tissue distribution, seeds.

It is found in the plastid. The protein localises to the chloroplast. The enzyme catalyses alpha-D-glucose 1-phosphate + ATP + H(+) = ADP-alpha-D-glucose + diphosphate. It participates in glycan biosynthesis; starch biosynthesis. With respect to regulation, activated by 3'phosphoglycerate, inhibited by orthophosphate. Allosteric regulation. In terms of biological role, this protein plays a role in synthesis of starch. It catalyzes the synthesis of the activated glycosyl donor, ADP-glucose from Glc-1-P and ATP. The chain is Glucose-1-phosphate adenylyltransferase small subunit 1, chloroplastic (AGPC) from Vicia faba (Broad bean).